The sequence spans 401 residues: Argininosuccinate synthase (401 aa).

Residues 8–16 and Ala-35 each bind ATP; that span reads AYSGGLDTS. L-citrulline contacts are provided by Tyr-86 and Ser-91. An ATP-binding site is contributed by Gly-116. The L-aspartate site is built by Thr-118, Asn-122, and Asp-123. Residue Asn-122 participates in L-citrulline binding. L-citrulline is bound by residues Arg-126, Ser-175, Ser-184, Glu-260, and Tyr-272.

This sequence belongs to the argininosuccinate synthase family. Type 1 subfamily. Homotetramer.

It localises to the cytoplasm. It carries out the reaction L-citrulline + L-aspartate + ATP = 2-(N(omega)-L-arginino)succinate + AMP + diphosphate + H(+). It participates in amino-acid biosynthesis; L-arginine biosynthesis; L-arginine from L-ornithine and carbamoyl phosphate: step 2/3. This Carboxydothermus hydrogenoformans (strain ATCC BAA-161 / DSM 6008 / Z-2901) protein is Argininosuccinate synthase.